Reading from the N-terminus, the 2629-residue chain is Protein DOP1 homolog (2629 aa).

Disordered stretches follow at residues 561–584 (NKGV…SRLN), 605–652 (SASN…TPRS), 688–710 (AGNV…PQFY), 1278–1340 (MDES…SSSA), 1371–1395 (TYRL…QTEH), 1435–1471 (ISKT…ATDS), and 1766–1785 (RQDT…SPTR). Polar residues-rich tracts occupy residues 605–615 (SASNQSVGRQS) and 636–647 (ASDTGQQSSSDL). A compositionally biased stretch (acidic residues) spans 1307-1320 (DITDNSDSSDFESD). Residues 1321 to 1333 (SELRETSLEKEDS) show a composition bias toward basic and acidic residues. Composition is skewed to polar residues over residues 1381-1391 (GENSLNSVATD) and 1435-1450 (ISKT…SCSQ).

Belongs to the DOP1 family.

The protein resides in the golgi apparatus membrane. In terms of biological role, may be involved in protein traffic between late Golgi and early endosomes. The polypeptide is Protein DOP1 homolog (Drosophila pseudoobscura pseudoobscura (Fruit fly)).